A 505-amino-acid polypeptide reads, in one-letter code: Glucan endo-1,3-beta-glucosidase 2 (505 aa).

The signal sequence occupies residues 1-20; that stretch reads MASLLHLLLLSLSLLVLASA. An N-linked (GlcNAc...) asparagine glycan is attached at Asn97. Glu125 serves as the catalytic Proton donor. Asn180 and Asn262 each carry an N-linked (GlcNAc...) asparagine glycan. Glu272 serves as the catalytic Nucleophile. 3 N-linked (GlcNAc...) asparagine glycosylation sites follow: Asn304, Asn361, and Asn365. Residues Cys369 and Cys432 are joined by a disulfide bond. Residues Asn461, Asn466, and Asn473 are each glycosylated (N-linked (GlcNAc...) asparagine). Residue Ser477 is the site of GPI-anchor amidated serine attachment. A propeptide spans 478-505 (removed in mature form); that stretch reads SGIRSDLYYSRGIWSILTVMILNVANIL.

This sequence belongs to the glycosyl hydrolase 17 family. Post-translationally, contains two additional disulfide bonds.

The protein localises to the cell membrane. It catalyses the reaction Hydrolysis of (1-&gt;3)-beta-D-glucosidic linkages in (1-&gt;3)-beta-D-glucans.. In Arabidopsis thaliana (Mouse-ear cress), this protein is Glucan endo-1,3-beta-glucosidase 2.